The following is a 393-amino-acid chain: Phosphoglycerate kinase (393 aa).

Substrate contacts are provided by residues 21 to 23 (DFN), 59 to 62 (HLGR), R118, and R151. Residues K201, E323, and 349-352 (GGDT) contribute to the ATP site.

This sequence belongs to the phosphoglycerate kinase family. As to quaternary structure, monomer.

The protein localises to the cytoplasm. It carries out the reaction (2R)-3-phosphoglycerate + ATP = (2R)-3-phospho-glyceroyl phosphate + ADP. It functions in the pathway carbohydrate degradation; glycolysis; pyruvate from D-glyceraldehyde 3-phosphate: step 2/5. In Pelotomaculum thermopropionicum (strain DSM 13744 / JCM 10971 / SI), this protein is Phosphoglycerate kinase.